The chain runs to 275 residues: Uronate dehydrogenase (275 aa).

Residues 22 to 23, 42 to 44, 60 to 61, and 80 to 84 each bind NAD(+); these read GL, DIA, DL, and FGGVS. Residues Ser84 and 120–122 each bind substrate; that span reads SNH. Tyr145 acts as the Proton acceptor in catalysis. Residue Lys149 participates in NAD(+) binding. Ser174 provides a ligand contact to substrate. Ser175 provides a ligand contact to NAD(+). Substrate is bound at residue Arg183.

It belongs to the NAD(P)-dependent epimerase/dehydratase family. Homohexamer.

The enzyme catalyses beta-D-galacturonate + NAD(+) = D-galactaro-1,5-lactone + NADH + H(+). It catalyses the reaction beta-D-glucuronate + NAD(+) = D-glucaro-1,5-lactone + NADH + H(+). Its pathway is carbohydrate acid metabolism; D-galacturonate degradation via prokaryotic oxidative pathway. In terms of biological role, catalyzes the oxidation of beta-D-galacturonate and beta-D-glucuronate to galactarate and D-glucarate, respectively. Cannot use NADP(+) instead of NAD(+) as cosubstrate. The chain is Uronate dehydrogenase (udh) from Pseudomonas syringae pv. tomato (strain ATCC BAA-871 / DC3000).